A 307-amino-acid chain; its full sequence is UDP-3-O-acyl-N-acetylglucosamine deacetylase (307 aa).

Zn(2+) is bound by residues His79, His239, and Asp243. Catalysis depends on His266, which acts as the Proton donor.

Belongs to the LpxC family. Requires Zn(2+) as cofactor.

It carries out the reaction a UDP-3-O-[(3R)-3-hydroxyacyl]-N-acetyl-alpha-D-glucosamine + H2O = a UDP-3-O-[(3R)-3-hydroxyacyl]-alpha-D-glucosamine + acetate. The protein operates within glycolipid biosynthesis; lipid IV(A) biosynthesis; lipid IV(A) from (3R)-3-hydroxytetradecanoyl-[acyl-carrier-protein] and UDP-N-acetyl-alpha-D-glucosamine: step 2/6. In terms of biological role, catalyzes the hydrolysis of UDP-3-O-myristoyl-N-acetylglucosamine to form UDP-3-O-myristoylglucosamine and acetate, the committed step in lipid A biosynthesis. This is UDP-3-O-acyl-N-acetylglucosamine deacetylase from Tolumonas auensis (strain DSM 9187 / NBRC 110442 / TA 4).